An 81-amino-acid chain; its full sequence is Photosystem I iron-sulfur center (81 aa).

2 consecutive 4Fe-4S ferredoxin-type domains span residues 2–31 (SHSV…MVPW) and 37–68 (GQIA…IRVY). Cys11, Cys14, Cys17, Cys21, Cys48, Cys51, Cys54, and Cys58 together coordinate [4Fe-4S] cluster.

The cyanobacterial PSI reaction center is composed of one copy each of PsaA,B,C,D,E,F,I,J,K,L,M and X, and forms trimeric complexes. Requires [4Fe-4S] cluster as cofactor.

It localises to the cellular thylakoid membrane. The catalysed reaction is reduced [plastocyanin] + hnu + oxidized [2Fe-2S]-[ferredoxin] = oxidized [plastocyanin] + reduced [2Fe-2S]-[ferredoxin]. In terms of biological role, apoprotein for the two 4Fe-4S centers FA and FB of photosystem I (PSI); essential for photochemical activity. FB is the terminal electron acceptor of PSI, donating electrons to ferredoxin. The C-terminus interacts with PsaA/B/D and helps assemble the protein into the PSI complex. Required for binding of PsaD and PsaE to PSI. PSI is a plastocyanin/cytochrome c6-ferredoxin oxidoreductase, converting photonic excitation into a charge separation, which transfers an electron from the donor P700 chlorophyll pair to the spectroscopically characterized acceptors A0, A1, FX, FA and FB in turn. The protein is Photosystem I iron-sulfur center of Synechococcus sp. (strain RCC307).